Consider the following 202-residue polypeptide: ER membrane protein complex subunit 7 homolog (202 aa).

The signal sequence occupies residues 1-23 (MAPIFRSTSLIAFSLFFFFFAST). A helical transmembrane segment spans residues 148–168 (IVKSPMGLMVGFMVVVVFLMP). Positions 179-202 (MKSAQEQMRSQGVPSLTSLLPASR) are disordered. Residues 182–202 (AQEQMRSQGVPSLTSLLPASR) are compositionally biased toward polar residues.

It belongs to the EMC7 family.

The protein resides in the membrane. This Arabidopsis thaliana (Mouse-ear cress) protein is ER membrane protein complex subunit 7 homolog.